Here is a 225-residue protein sequence, read N- to C-terminus: Glutathione S-transferase Mu 5 (225 aa).

The 88-residue stretch at 5-92 folds into the GST N-terminal domain; that stretch reads KSMVLGYWDI…YIARKHNMCG (88 aa). Phosphoserine is present on serine 6. Glutathione is bound by residues 11–12, 50–54, 63–64, and 76–77; these read YW, WLDVK, NL, and QS. Residues 94–212 form the GST C-terminal domain; the sequence is TEEEKIRVDI…QSDRCFKMPI (119 aa). Position 120 (tyrosine 120) interacts with substrate.

Belongs to the GST superfamily. Mu family. Homodimer. In terms of processing, the N-terminus is blocked. In terms of tissue distribution, expressed in testis and brain. Very low expression in liver, kidney, heart and lung.

The protein localises to the cytoplasm. The catalysed reaction is RX + glutathione = an S-substituted glutathione + a halide anion + H(+). Functionally, conjugation of reduced glutathione to a wide number of exogenous and endogenous hydrophobic electrophiles. This Rattus norvegicus (Rat) protein is Glutathione S-transferase Mu 5 (Gstm5).